The sequence spans 326 residues: Interleukin-1-binding protein (326 aa).

The N-terminal stretch at methionine 1–valine 18 is a signal peptide. Ig-like domains follow at residues proline 24–threonine 115, serine 122–lysine 212, and proline 221–threonine 322. Cysteine 48 and cysteine 99 form a disulfide bridge. N-linked (GlcNAc...) asparagine; by host glycans are attached at residues asparagine 80, asparagine 103, and asparagine 113. Cysteine 143 and cysteine 194 form a disulfide bridge. 2 N-linked (GlcNAc...) asparagine; by host glycosylation sites follow: asparagine 206 and asparagine 237. A disulfide bond links cysteine 242 and cysteine 309.

This sequence belongs to the interleukin-1 receptor family. Interacts with mouse Il1b.

The protein localises to the secreted. In terms of biological role, may reduce the host inflammatory response by interacting with inteleukin-1 beta (Il1b) and thus decreasing the association between IL1B and its cellular receptor. This chain is Interleukin-1-binding protein (OPG201), found in Vaccinia virus (strain Western Reserve) (VACV).